Consider the following 957-residue polypeptide: Calsyntenin-3 (957 aa).

Residues 1–19 form the signal peptide; the sequence is MTLLLVSLLLASLLQISSG. Over 1 to 21 the chain is Cytoplasmic; sequence MTLLLVSLLLASLLQISSGNK. Over 20–848 the chain is Extracellular; sequence NKANKHKPWI…SHRNSMVPSA (829 aa). Positions 22-42 form an intramembrane region, helical; that stretch reads ANKHKPWIEAEYQGIVMENDN. Cadherin domains follow at residues 29-145 and 146-246; these read IEAE…APVF and VERL…KPSW. At 43–73 the chain is on the cytoplasmic side; it reads TVLLNPPLFALDKDAPLRYAGEICGFRLHGS. Positions 74–94 form an intramembrane region, helical; the sequence is GVPFKAVILDKATGEGLIRAK. Topologically, residues 95–139 are cytoplasmic; sequence EPVDCEAQKEHTFTTQAYDCVDGPDGANTKKSHKATVHVRVNDVN. The segment at residues 140 to 160 is an intramembrane region (helical); it reads EFAPVFVERLYRAAVTEGKLY. Residues 161 to 248 are Cytoplasmic-facing; it reads DRILRVEAID…KPTCKPSWQG (88 aa). A helical transmembrane segment spans residues 249 to 269; sequence WNKRIEYAPGAGSLALFPGIR. The Lumenal segment spans residues 270–357; sequence LETCDEPLWN…GTQAVQVPLG (88 aa). N299, N327, N347, N508, and N741 each carry an N-linked (GlcNAc...) asparagine glycan. The helical transmembrane segment at 849–869 threads the bilayer; sequence ATLIIVVCVGFLVLMVILGLV. Over 870 to 957 the chain is Cytoplasmic; the sequence is RIHSLHRRVS…RIIESPPHRY (88 aa). Residues 916–957 are disordered; the sequence is QQTGVAGVAGGQQEEEDSSDSEAADSPSSDERRIIESPPHRY. Residues 928 to 938 show a composition bias toward acidic residues; it reads QEEEDSSDSEA. Residues 944-957 show a composition bias toward basic and acidic residues; it reads SDERRIIESPPHRY.

This sequence belongs to the calsyntenin family. As to quaternary structure, interacts (via cadherin domains) with both alpha and beta isoforms of neurexins (NRXN1, NRXN2 and NRXN3). Directly interacts with APBA2. Forms a tripartite complex with APBA2 and APP. Interacts with low affinity with KLC1. Interacts with SLC23A2/SVCT2. In terms of assembly, interacts with CIDEA; inhibiting the lipid transferase activity of CIDEA. Interacts with CIDEC; inhibiting the lipid transferase activity of CIDEC. In terms of processing, proteolytically processed under normal cellular conditions. A primary zeta-cleavage generates a large extracellular (soluble) N-terminal domain (sAlc) and a short C-terminal transmembrane fragment (CTF1). A secondary cleavage catalyzed by gamma-secretase within the transmembrane domain releases the beta-Alc-beta chain in the extracellular milieu and produces an intracellular fragment (AlcICD). This processing is strongly suppressed in the tripartite complex formed with APBA2 and APP, which seems to prevent the association with gamma-secretase. Post-translationally, ubiquitinated: endoplasmic reticulum-localized protein is ubiquitinated and degraded by the endoplasmic reticulum-associated degradation (ERAD) pathway.

Its subcellular location is the postsynaptic cell membrane. The protein localises to the endoplasmic reticulum membrane. It is found in the golgi apparatus membrane. It localises to the cell projection. The protein resides in the dendrite. Its subcellular location is the lipid droplet. In terms of biological role, postsynaptic adhesion molecule that binds to presynaptic neurexins to mediate both excitatory and inhibitory synapse formation. Promotes synapse development by acting as a cell adhesion molecule at the postsynaptic membrane, which associates with both neurexin-alpha and neurexin-beta proteins at the presynaptic membrane. Regulates the balance between excitatory and inhibitory synapses by inhibiting formation of excitatory parallel-fiber synapses and promoting formation of inhibitory synapses in the same neuron. May also be involved in ascorbate (vitamin C) uptake via its interaction with SLC23A2/SVCT2. Complex formation with APBA2 and APP, stabilizes APP metabolism and enhances APBA2-mediated suppression of beta-APP40 secretion, due to the retardation of intracellular APP maturation. Its function is as follows. Adipose-specific isoform that plays a key role in adaptive thermogenesis. Facilitates the efficient use of stored triglyceride by promoting multilocular morphology of thermogenic adipocytes: acts by inhibiting the activity of CIDEA and CIDEC on lipid droplets, thereby preventing lipid droplet fusion and facilitating lipid utilization. May also participate in adaptive thermogenesis by promoting sympathetic innervation of thermogenic adipose tissue: acts by driving secretion of neurotrophic factor S100B from brown adipocytes, stimulating neurite outgrowth from sympathetic neurons. In Rattus norvegicus (Rat), this protein is Calsyntenin-3.